The chain runs to 347 residues: Selenide, water dikinase (347 aa).

C17 is an active-site residue. ATP is bound by residues K20 and 48-50 (TRD). D51 contacts Mg(2+). Residues D68, D91, and 139–141 (GHS) each bind ATP. D91 is a Mg(2+) binding site. D227 contacts Mg(2+).

The protein belongs to the selenophosphate synthase 1 family. Class I subfamily. In terms of assembly, homodimer. Mg(2+) serves as cofactor.

It catalyses the reaction hydrogenselenide + ATP + H2O = selenophosphate + AMP + phosphate + 2 H(+). Functionally, synthesizes selenophosphate from selenide and ATP. This chain is Selenide, water dikinase, found in Shigella flexneri serotype 5b (strain 8401).